We begin with the raw amino-acid sequence, 111 residues long: uncharacterized protein (111 aa).

Helical transmembrane passes span 4–22 (FWIL…QFFI), 49–71 (LLIL…LFFI), and 91–108 (YMYH…LIYV).

Its subcellular location is the cell membrane. This is an uncharacterized protein from Bacillus subtilis (strain 168).